The chain runs to 339 residues: Foldase protein PrsA (339 aa).

An N-terminal signal peptide occupies residues 1 to 26; that stretch reads MKHLKNNTKKFTALLFALLFSMSIAG. A lipid anchor (N-palmitoyl cysteine) is attached at cysteine 27. Cysteine 27 is lipidated: S-diacylglycerol cysteine. In terms of domain architecture, PpiC spans 197–287; that stretch reads KPTFHAQHVL…FGYHVIKLID (91 aa).

Belongs to the PrsA family.

It is found in the cell membrane. It carries out the reaction [protein]-peptidylproline (omega=180) = [protein]-peptidylproline (omega=0). Its function is as follows. Plays a major role in protein secretion by helping the post-translocational extracellular folding of several secreted proteins. The protein is Foldase protein PrsA of Clostridium tetani (strain Massachusetts / E88).